A 508-amino-acid polypeptide reads, in one-letter code: Cytochrome P450 monooxygenase lepD (508 aa).

Residues 22–42 form a helical membrane-spanning segment; sequence IAAAVAVVASIVIYLALSSFF. N-linked (GlcNAc...) asparagine glycosylation is found at Asn53 and Asn416. Cys454 is a heme binding site.

Belongs to the cytochrome P450 family. Heme serves as cofactor.

The protein resides in the membrane. Its function is as follows. Cytochrome P450 monooxygenase; part of the gene cluster 23 that mediates the biosynthesis of a family of 2-pyridones known as leporins. The hybrid PKS-NRPS synthetase lepA and the enoyl reductase lepG are responsible for fusion of phenylalanine with a hexaketide and subsequent release of the stable tetramic acid precursor, pre-leporin C. Because lepA lacks a designated enoylreductase (ER) domain, the required activity is provided the enoyl reductase lepG. It is possible that the dehydrogenase lepF also participates in production of pre-leporin C. Cytochrome P450 monooxygenase lepH is then required for the ring expansion step to yield leporin C. Leporin C is then presumably further oxidized by the N-hydroxylase lepD to form leporin B. LepI may possess a function in biosynthesis upstream of lepA. Leporin B is further oxidized in the presence of ferric ion to give the leporin B trimer-iron chelate, but whether or not this reaction is catalyzed by an enzyme in the pathway or by ferric ion is not determined yet. This Aspergillus flavus (strain ATCC 200026 / FGSC A1120 / IAM 13836 / NRRL 3357 / JCM 12722 / SRRC 167) protein is Cytochrome P450 monooxygenase lepD.